Here is a 359-residue protein sequence, read N- to C-terminus: GATA-binding factor 1-A (359 aa).

The segment at 1-21 (MDYTTLTTQDPDPNYTESGLA) is disordered. 2 GATA-type zinc fingers span residues 178 to 202 (CVNC…CNAC) and 232 to 256 (CSNC…CNAC). 2 disordered regions span residues 271-311 (MKKE…SPYP) and 323-359 (PMGH…VTPP). Basic residues predominate over residues 279 to 291 (RNRKVSSRSKKKK).

Expressed in the developing ventral blood island, and in both tadpole and adult erythrocytes.

It localises to the nucleus. Functionally, transcription factor that acts synergistically with tal1/scl and lmo2 to specify embryonic dorsal mesoderm to a hematopoietic fate. The chain is GATA-binding factor 1-A (gata1-a) from Xenopus laevis (African clawed frog).